The sequence spans 242 residues: Thaumatin-like protein 2 (242 aa).

An N-terminal signal peptide occupies residues 1–23 (MMKTLGAVLSLSLTLLSFGGAHA). 8 disulfides stabilise this stretch: Cys32–Cys241, Cys77–Cys87, Cys92–Cys99, Cys147–Cys230, Cys152–Cys213, Cys160–Cys176, Cys180–Cys189, and Cys190–Cys200.

This sequence belongs to the thaumatin family. In terms of tissue distribution, preferentially expressed in the abscission zone of fruit. Also expressed in leaf abscission zone.

The protein localises to the secreted. May be involved in protecting plant tissues from pathogen infection. The sequence is that of Thaumatin-like protein 2 from Prunus persica (Peach).